Here is a 58-residue protein sequence, read N- to C-terminus: Large ribosomal subunit protein eL37 (58 aa).

Zn(2+)-binding residues include cysteine 20, cysteine 23, cysteine 35, and cysteine 38. Residues 20 to 38 (CRRCGEKSYHVKKERCSSC) form a C4-type zinc finger. Residues 39–58 (GFGDSASRRGYAWQSKSGDN) are disordered.

The protein belongs to the eukaryotic ribosomal protein eL37 family. The cofactor is Zn(2+).

Its function is as follows. Binds to the 23S rRNA. The protein is Large ribosomal subunit protein eL37 of Halorubrum lacusprofundi (strain ATCC 49239 / DSM 5036 / JCM 8891 / ACAM 34).